Reading from the N-terminus, the 395-residue chain is Innexin inx3 (395 aa).

At 1–37 the chain is on the cytoplasmic side; that stretch reads MAVFGMVSAVSGFIKIRYLLDKAVIDNMVFRCHYRIT. Residues 38–58 traverse the membrane as a helical segment; it reads TAILFTCCIIVTANNLIGDPI. The Extracellular portion of the chain corresponds to 59-114; the sequence is SCINDGAIPMHVINTFCWITYTYTIPGQQHRQIGTDVAGPGLGNEYGQEKRYHSYY. Residues 115–135 traverse the membrane as a helical segment; the sequence is QWVPFVLFFQGLMFYVPHWVW. Residues 136–183 lie on the Cytoplasmic side of the membrane; the sequence is KNMEDGKIRMITDGLRGMVSVPDDYRRDRQDRILKYFVNSLNTHNGYS. The helical transmembrane segment at 184–204 threads the bilayer; sequence FAYFFCELLNFINVIVNIFMV. Over 205–272 the chain is Extracellular; that stretch reads DKFLGGAFMS…VLALNILNEK (68 aa). Residues 273 to 293 form a helical membrane-spanning segment; that stretch reads IYIFLWFWFIILATISGVAVL. Residues 294-395 lie on the Cytoplasmic side of the membrane; that stretch reads YSLVVIMMPT…TFGGGKETET (102 aa). Phosphoserine occurs at positions 366 and 377. Tyrosine 381 is subject to Phosphotyrosine.

It belongs to the pannexin family. In terms of assembly, heterooligomer of Inx2 (via cytoplasmic C-terminal region) and Inx3 (via cytoplasmic C-terminal region). In ovary, expressed in nurse cells and follicle cells. Expressed in embryonic epithelial cells. Ubiquitously expressed in stage 5 embryos. Expressed in foregut and hindgut from stage 11-17 and in proventriculus, epidermis and CNS in stage 16 embryos (at protein level). Expressed in anterior and ventral regions in stage 8 embryos. Repeating epidermal pattern emerges at stage 11, refines to one or two cells at each side of the segment borders by stage 13. Expressed in the imaginal wing disk. In pupae, expressed in the CNS and in secondary and tertiary pigment cells of the retina.

It localises to the cell membrane. It is found in the cell junction. Its subcellular location is the gap junction. The protein resides in the cytoplasm. The protein localises to the lateral cell membrane. It localises to the apicolateral cell membrane. In terms of biological role, structural components of the gap junctions. Essential for proper epithelial development of the epidermis. The sequence is that of Innexin inx3 (Inx3) from Drosophila melanogaster (Fruit fly).